A 241-amino-acid chain; its full sequence is MYQFQQDNQYFIFNFDRTFDQATEFFQAEFWQKQERVIGSAKGRGTTYFLQTEDWFGVNCALRHYYRGGLWGKLNKDRYRFSDLETTRSFAEFHLLQRLYEAGFPVPKPIAARIQKGKLGICYQADILTEKIENAQDLTALLQTQTLPKETWTQIGRLIRKLHDLQICHTDLNAHNILLQQIEQEQKCWLLDFDKCGEKSGDFWKVQNLNRLKRSFEKEIRRMNIQFTEQNWADLTAAYHQ.

Aspartate 171 is a catalytic residue.

Belongs to the protein kinase superfamily. KdkA/RfaP family.

The protein resides in the cell inner membrane. The enzyme catalyses an alpha-Kdo-(2-&gt;6)-lipid IVA + ATP = a 4-O-phospho-alpha-Kdo-(2-&gt;6)-lipid IVA + ADP + H(+). It functions in the pathway bacterial outer membrane biogenesis; LPS core biosynthesis. In terms of biological role, catalyzes the ATP-dependent phosphorylation of the 3-deoxy-D-manno-octulosonic acid (Kdo) residue in Kdo-lipid IV(A) at the 4-OH position. The sequence is that of 3-deoxy-D-manno-octulosonic acid kinase from Haemophilus influenzae (strain PittGG).